A 795-amino-acid polypeptide reads, in one-letter code: Protocadherin beta-12 (795 aa).

Positions 1–26 are cleaved as a signal peptide; that stretch reads MENGGAGTLQIRQVLLFFVLLGMSQA. Residues 27–690 lie on the Extracellular side of the membrane; sequence GSETGNFLVM…AQADSLTVYL (664 aa). 5 Cadherin domains span residues 35 to 133, 138 to 242, 247 to 347, 352 to 451, and 456 to 561; these read VMEE…SPVF, MLLE…SPEF, YEVK…APEI, ITSP…APAF, and YALF…SPFV. Asparagine 418, asparagine 436, asparagine 487, and asparagine 567 each carry an N-linked (GlcNAc...) asparagine glycan. The Cadherin 6 domain occupies 568 to 671; the sequence is GSAPCTELVP…LVDGFSQPYL (104 aa). Residues 691–711 traverse the membrane as a helical segment; that stretch reads VVALASVSSLFLFSVLLFVAV. Topologically, residues 712-795 are cytoplasmic; sequence RLCRRSRAAP…NPPFQNNLGF (84 aa).

It localises to the cell membrane. In terms of biological role, potential calcium-dependent cell-adhesion protein. May be involved in the establishment and maintenance of specific neuronal connections in the brain. The chain is Protocadherin beta-12 (PCDHB12) from Homo sapiens (Human).